Reading from the N-terminus, the 431-residue chain is Enolase (431 aa).

A (2R)-2-phosphoglycerate-binding site is contributed by Gln-167. The Proton donor role is filled by Glu-209. Residues Asp-246, Glu-289, and Asp-316 each coordinate Mg(2+). Lys-341, Arg-370, Ser-371, and Lys-392 together coordinate (2R)-2-phosphoglycerate. Catalysis depends on Lys-341, which acts as the Proton acceptor.

The protein belongs to the enolase family. As to quaternary structure, component of the RNA degradosome, a multiprotein complex involved in RNA processing and mRNA degradation. Requires Mg(2+) as cofactor.

Its subcellular location is the cytoplasm. The protein localises to the secreted. It is found in the cell surface. It carries out the reaction (2R)-2-phosphoglycerate = phosphoenolpyruvate + H2O. The protein operates within carbohydrate degradation; glycolysis; pyruvate from D-glyceraldehyde 3-phosphate: step 4/5. Catalyzes the reversible conversion of 2-phosphoglycerate (2-PG) into phosphoenolpyruvate (PEP). It is essential for the degradation of carbohydrates via glycolysis. The protein is Enolase of Shewanella sp. (strain MR-4).